Consider the following 117-residue polypeptide: Large ribosomal subunit protein bL20 (117 aa).

Belongs to the bacterial ribosomal protein bL20 family.

Binds directly to 23S ribosomal RNA and is necessary for the in vitro assembly process of the 50S ribosomal subunit. It is not involved in the protein synthesizing functions of that subunit. In Citrifermentans bemidjiense (strain ATCC BAA-1014 / DSM 16622 / JCM 12645 / Bem) (Geobacter bemidjiensis), this protein is Large ribosomal subunit protein bL20.